A 507-amino-acid polypeptide reads, in one-letter code: Cytochrome P450 monooxygenase nodZ (507 aa).

Helical transmembrane passes span 1-21 and 205-225; these read MITASTSVFGGLILAFIFSLL and GFLHCMAIAGTILGAVTPWFL. N352 carries N-linked (GlcNAc...) asparagine glycosylation. C445 lines the heme pocket.

The protein belongs to the cytochrome P450 family. The cofactor is heme.

Its subcellular location is the membrane. The protein operates within secondary metabolite biosynthesis. Cytochrome P450 monooxygenase; part of the gene cluster that mediates the biosynthesis of the indole diterpenes nodulisporic acids (NA). Nodulisporic acid A (NAA) and its chemically modified derivatives are of particular significance because of their highly potent insecticidal activity against blood-feeding arthropods and lack of observable adverse effects on mammals, in particular the tremogenicity associated with the paspaline-derived IDTs is not observed. The geranylgeranyl diphosphate (GGPP) synthase ggs1, localized outside of the cluster, is proposed to catalyze the first step in nodulisporic acid biosynthesis via conversion of farnesyl pyrophosphate and isopentyl pyrophosphate into geranylgeranyl pyrophosphate (GGPP). Condensation of indole-3-glycerol phosphate with GGPP by the prenyl transferase nodC then forms 3-geranylgeranylindole (3-GGI). Epoxidation by the FAD-dependent monooxygenase nodM leads to a single-epoxidized-GGI that is substrate of the terpene cyclase nodB for cyclization to yield emindole SB. The terminal methyl carbon, C28, of emindole SB is then oxidized by the cytochrome P450 monooxygenase nodW to produce nodulisporic acid F (NAF), the pentacyclic core of NAA. NAF is converted to nodulisporic acid E (NAE) via prenylation. This step is probably performed by one of the indole diterpene prenyltransferases nodD1 or nodD2. Several oxidation steps performed by the FAD-linked oxidoreductase nodO and one of the cytochrome P450 monooxygenase nodR, nodX or nodZ further convert NAE to nodulisporic acid D (NAD). NAD is substrate of cytochrome P450 monooxygenase nodJ to produce the precursor of nodulisporic acid C (NAC), converted to NAC by one of the indole diterpene prenyltransferases nodD1 or nodD2. The FAD-dependent monooxygenase nodY2 then oxidizes NAC to nodulisporic acid B (NAB). Finally NAB is converted to NAA by one of the cytochrome P450 monooxygenases nodR, nodX or nodZ. In Hypoxylon pulicicidum, this protein is Cytochrome P450 monooxygenase nodZ.